Here is a 385-residue protein sequence, read N- to C-terminus: MIKTFPLNSRAKTTALKQPKELFSFARDIDGEYIFDSTKVQDENLSYYYLPDASVDKQIDLGAGYSNFKKIPEEENLGDFPALLKGVMNYEQSTGTKINSDIITFRGLMTKILTLPYNLKDPLDLHVIVYDGQLFIKNNDEIELKRRQQNNQHEDPSKQEMMKKFEYSGYKFEAVSTLPKPWGDCSRQLIEKRNKKVVNNYEQYISVVKTGIGKVKLLLAGEVDCLWDYIPEDGKDILPHYVELKTSKVIEAPGQVVNFEKKLFRTWAQSFLIGIRKIVYGFRDDNLILRNVEVYNTEEIPIMLKDTINVNTKIVCMNALKWYGAVIEWINNEIPKDADKSWSLTYDPGSKSFSIVELMQDSELRNSVITEDFKEWRISLHKTES.

Glutamate 173 serves as a coordination point for a divalent metal cation. Substrate is bound at residue glutamate 222. Residues aspartate 224, glutamate 243, and leucine 244 each contribute to the a divalent metal cation site. Substrate-binding residues include lysine 245 and glutamine 269.

The protein belongs to the DXO/Dom3Z family. Interacts with RAT1; the interaction is direct, stabilizes RAT1 protein structure and stimulates its exoribonuclease activity. The interaction also stimulates RAI1 pyrophosphohydrolase activity, probably by recruiting it to mRNA substrates. The cofactor is a divalent metal cation.

It localises to the nucleus. The catalysed reaction is a 5'-end NAD(+)-phospho-ribonucleoside in mRNA + H2O = a 5'-end phospho-ribonucleoside in mRNA + NAD(+) + H(+). It carries out the reaction a 5'-end (N(7)-methyl 5'-triphosphoguanosine)-ribonucleoside-ribonucleotide in mRNA + H2O = a (N(7)-methyl 5'-triphosphoguanosine)-nucleoside + a 5'-end phospho-ribonucleoside in mRNA + H(+). It catalyses the reaction a 5'-end triphospho-ribonucleoside in mRNA + H2O = a 5'-end phospho-ribonucleoside in mRNA + diphosphate + H(+). Functionally, decapping enzyme for NAD-capped RNAs: specifically hydrolyzes the nicotinamide adenine dinucleotide (NAD) cap from a subset of RNAs by removing the entire NAD moiety from the 5'-end of an NAD-capped RNA. The NAD-cap is present at the 5'-end of some RNAs and snoRNAs. In contrast to the canonical 5'-end N7 methylguanosine (m7G) cap, the NAD cap promotes mRNA decay. Also acts as a non-canonical decapping enzyme that removes the entire cap structure of m7G capped or incompletely capped RNAs. Has decapping activity toward incomplete 5'-end m7G cap mRNAs such as unmethylated 5'-end-capped RNA (cap0), while it has no activity toward 2'-O-ribose methylated m7G cap (cap1). Also possesses RNA 5'-pyrophosphohydrolase activity by hydrolyzing the 5'-end triphosphate to release pyrophosphates. Stimulates exoribonuclease activity of Rat1, allowing it to degrade RNAs with stable secondary structure more effectively. The protein is Decapping nuclease RAI1 (RAI1) of Debaryomyces hansenii (strain ATCC 36239 / CBS 767 / BCRC 21394 / JCM 1990 / NBRC 0083 / IGC 2968) (Yeast).